The following is a 538-amino-acid chain: Furcatin hydrolase (538 aa).

Residues 1–66 (MATITTLASS…NFNKDNWLAS (66 aa)) constitute a chloroplast transit peptide. The disordered stretch occupies residues 18 to 37 (SFPGGSSRKPKKDNLSIKPP). A beta-D-glucoside contacts are provided by residues glutamine 88, histidine 192, and 237–238 (NE). Glutamate 238 acts as the Proton donor in catalysis. A disulfide bridge links cysteine 257 with cysteine 260. A beta-D-glucoside is bound by residues tyrosine 376, glutamate 447, tryptophan 494, 501-502 (EW), and phenylalanine 510. Residue glutamate 447 is the Nucleophile of the active site.

Belongs to the glycosyl hydrolase 1 family. Expressed in young and mature leaves, but not in fruit and stem.

The protein localises to the plastid. Its subcellular location is the chloroplast. The enzyme catalyses 7-[beta-D-apiofuranosyl-(1-&gt;6)-beta-D-glucopyranosyloxy]isoflavonoid + H2O = a 7-hydroxyisoflavonoid + beta-D-apiofuranosyl-(1-&gt;6)-D-glucose.. Functionally, disaccharide-specific acuminosidase, hydrolyzes the beta-glycosidic bond between p-allylphenol and acuminose with retention of anomeric configuration. Has highest activity towards furcatin, and lower activity towards beta-primeverosides and beta-vicianoside. Has very low activity towards beta-gentobiosides. In Viburnum furcatum (Scarlet leaved viburnum), this protein is Furcatin hydrolase.